A 377-amino-acid chain; its full sequence is ATP synthase gamma chain, chloroplastic (377 aa).

Residues 1-55 constitute a chloroplast transit peptide; the sequence is MSCSNLTMLVSSKPSLSDSSALSFRSSVSPFQLPNHNTSGPSNPSRSSSVTPVHC. Residues 30 to 52 are disordered; sequence PFQLPNHNTSGPSNPSRSSSVTP. Low complexity predominate over residues 37 to 52; it reads NTSGPSNPSRSSSVTP. The active site involves cysteine 143. An intrachain disulfide couples cysteine 253 to cysteine 259.

Belongs to the ATPase gamma chain family. In terms of assembly, F-type ATPases have 2 components, CF(1) - the catalytic core - and CF(0) - the membrane proton channel. CF(1) has five subunits: alpha(3), beta(3), gamma(1), delta(1), epsilon(1). CF(0) has four main subunits: a, b, b' and c.

The protein resides in the plastid. The protein localises to the chloroplast thylakoid membrane. Produces ATP from ADP in the presence of a proton gradient across the membrane. The gamma chain is believed to be important in regulating ATPase activity and the flow of protons through the CF(0) complex. The protein is ATP synthase gamma chain, chloroplastic (ATPC) of Nicotiana tabacum (Common tobacco).